The primary structure comprises 549 residues: Glutamyl-tRNA(Gln) amidotransferase subunit B, mitochondrial (549 aa).

A mitochondrion-targeting transit peptide spans 1–23 (MLRISRDTKIVARVTHVTKSRTY).

This sequence belongs to the GatB/GatE family. GatB subfamily. Subunit of the heterotrimeric GatFAB amidotransferase (AdT) complex, composed of A, B and F subunits.

The protein resides in the mitochondrion. It carries out the reaction L-glutamyl-tRNA(Gln) + L-glutamine + ATP + H2O = L-glutaminyl-tRNA(Gln) + L-glutamate + ADP + phosphate + H(+). In terms of biological role, allows the formation of correctly charged Gln-tRNA(Gln) through the transamidation of misacylated Glu-tRNA(Gln) in the mitochondria. The reaction takes place in the presence of glutamine and ATP through an activated gamma-phospho-Glu-tRNA(Gln). This Yarrowia lipolytica (strain CLIB 122 / E 150) (Yeast) protein is Glutamyl-tRNA(Gln) amidotransferase subunit B, mitochondrial.